The primary structure comprises 161 residues: Pleiotrophin-A (161 aa).

The first 23 residues, 1-23, serve as a signal peptide directing secretion; it reads MRHQHGLFMLALLAFLFVITVLG. Cystine bridges form between cysteine 41–cysteine 70, cysteine 49–cysteine 79, cysteine 56–cysteine 83, cysteine 93–cysteine 125, and cysteine 103–cysteine 135. Chondroitin sulfate binding regions lie at residues 86-93 and 117-125; these read KKQFGAEC and KRALHNAEC. The segment at 136 to 161 is disordered; the sequence is GKVTKPKLQESKKKKKEGKNKEKLLD. Residues 141–161 are chondroitin sulfate A binding; the sequence is PKLQESKKKKKEGKNKEKLLD.

Belongs to the pleiotrophin family. Expressed in high levels in brain and eye. Lower levels in bone. In the tailbud embryo stage, it is expressed exclusively in the central nervous system, especially in the hind region of the brain.

Its subcellular location is the secreted. Functionally, secreted growth factor that mediates its signal through cell-surface proteoglycan and non-proteoglycan receptors. Binds cell-surface proteoglycan receptor via their chondroitin sulfate (CS) groups. Thereby regulates many processes like cell proliferation, cell survival, cell growth, cell differentiation and cell migration. Has antibacterial activity against both Gram-positive and Gram-negative bacteria. The protein is Pleiotrophin-A (ptn-a) of Xenopus laevis (African clawed frog).